A 724-amino-acid polypeptide reads, in one-letter code: Semaphorin-2A (724 aa).

The signal sequence occupies residues Met-1–Ala-25. Residues Gln-45 to Leu-522 enclose the Sema domain. An N-linked (GlcNAc...) asparagine glycan is attached at Asn-95. The cysteines at positions 118 and 129 are disulfide-linked. N-linked (GlcNAc...) asparagine glycans are attached at residues Asn-163, Asn-190, Asn-229, and Asn-314. Intrachain disulfides connect Cys-291–Cys-399 and Cys-315–Cys-358. An N-linked (GlcNAc...) asparagine glycan is attached at Asn-401. 2 disulfide bridges follow: Cys-525–Cys-541 and Cys-535–Cys-550. The Ig-like C2-type domain occupies Pro-552–Ala-663. A glycan (N-linked (GlcNAc...) asparagine) is linked at Asn-563. A disulfide bridge connects residues Cys-590 and Cys-647. Asn-658, Asn-670, and Asn-708 each carry an N-linked (GlcNAc...) asparagine glycan.

Belongs to the semaphorin family. Interacts with PlexB. In terms of tissue distribution, transiently expressed by a single large muscle during motoneuron outgrowth and synapse formation.

It is found in the secreted. In terms of biological role, ligand for transmembrane receptor PlexB. Plays a role in growth cone guidance. Required for both proper adult behavior and survival. Can function as a selective target-derived signal that inhibits the formation of specific synaptic terminal arbors. Function in neurons is essential for adult survival, motor neuron survival, and is important for climbing behavior and activity. During embryogenesis, plays an important role in correct salivary gland positioning. This is Semaphorin-2A from Drosophila melanogaster (Fruit fly).